The sequence spans 303 residues: tRNA pseudouridine synthase B (303 aa).

The Nucleophile role is filled by Asp-46.

The protein belongs to the pseudouridine synthase TruB family. Type 1 subfamily.

It carries out the reaction uridine(55) in tRNA = pseudouridine(55) in tRNA. Responsible for synthesis of pseudouridine from uracil-55 in the psi GC loop of transfer RNAs. The sequence is that of tRNA pseudouridine synthase B from Hydrogenovibrio crunogenus (strain DSM 25203 / XCL-2) (Thiomicrospira crunogena).